A 204-amino-acid polypeptide reads, in one-letter code: MISRMKGIILEKQPPWILLDIQGMGYDIQLPMTCFYQLPELGQEAIIFTHFVVREDAQLLYGFHHPKERAMFSELIKVNGVGPKLGLAILSGMSSEEFICALEKEDISNLIKLPGVGKKTAERLLVEMKDRIKNLNKNLFKSTADHMLSSVSTDLSAKSAEAEAISALISLGYKPQEAAQLIKNIAQPDLDSQALIKHALRSTL.

The interval Met1–His64 is domain I. Residues His65–Thr143 form a domain II region. The segment at Ala144–Leu155 is flexible linker. Residues Ser156 to Leu204 form a domain III region.

The protein belongs to the RuvA family. As to quaternary structure, homotetramer. Forms an RuvA(8)-RuvB(12)-Holliday junction (HJ) complex. HJ DNA is sandwiched between 2 RuvA tetramers; dsDNA enters through RuvA and exits via RuvB. An RuvB hexamer assembles on each DNA strand where it exits the tetramer. Each RuvB hexamer is contacted by two RuvA subunits (via domain III) on 2 adjacent RuvB subunits; this complex drives branch migration. In the full resolvosome a probable DNA-RuvA(4)-RuvB(12)-RuvC(2) complex forms which resolves the HJ.

It localises to the cytoplasm. Functionally, the RuvA-RuvB-RuvC complex processes Holliday junction (HJ) DNA during genetic recombination and DNA repair, while the RuvA-RuvB complex plays an important role in the rescue of blocked DNA replication forks via replication fork reversal (RFR). RuvA specifically binds to HJ cruciform DNA, conferring on it an open structure. The RuvB hexamer acts as an ATP-dependent pump, pulling dsDNA into and through the RuvAB complex. HJ branch migration allows RuvC to scan DNA until it finds its consensus sequence, where it cleaves and resolves the cruciform DNA. This is Holliday junction branch migration complex subunit RuvA from Hamiltonella defensa subsp. Acyrthosiphon pisum (strain 5AT).